A 705-amino-acid polypeptide reads, in one-letter code: Elongation factor G 2 (705 aa).

In terms of domain architecture, tr-type G spans 8–288 (ERYRNIGISA…AVIDYLPSPA (281 aa)). GTP contacts are provided by residues 17 to 24 (AHIDAGKT), 86 to 90 (DTPGH), and 140 to 143 (NKMD).

It belongs to the TRAFAC class translation factor GTPase superfamily. Classic translation factor GTPase family. EF-G/EF-2 subfamily.

The protein resides in the cytoplasm. Functionally, catalyzes the GTP-dependent ribosomal translocation step during translation elongation. During this step, the ribosome changes from the pre-translocational (PRE) to the post-translocational (POST) state as the newly formed A-site-bound peptidyl-tRNA and P-site-bound deacylated tRNA move to the P and E sites, respectively. Catalyzes the coordinated movement of the two tRNA molecules, the mRNA and conformational changes in the ribosome. This is Elongation factor G 2 from Bordetella parapertussis (strain 12822 / ATCC BAA-587 / NCTC 13253).